The chain runs to 426 residues: Spermatogenesis-associated protein 2-like protein (426 aa).

4 disordered regions span residues 204–223 (AQDEEPPPLPPRGTPATYGA), 234–256 (DESSEASLYGEPSPGLDSPPVEL), 269–300 (LWGSGGQPWEPPADDMHRASSPPYGALEEELE), and 316–347 (SRSGDLAPPESPSSPGQASPRHRQAEAAASSA). A phosphoserine mark is found at serine 318 and serine 326.

It belongs to the SPATA2 family.

The polypeptide is Spermatogenesis-associated protein 2-like protein (Mus musculus (Mouse)).